A 112-amino-acid chain; its full sequence is MKKVLFLLLACTAVAFAAETNAPVEQEAINVWIKAFSVLAAGLGLGVAALGGAIGMGNTAAATIAGTARNPGLGPKLMTTMFIALAMIEAQVIYALVIALIALYANPFIVLQ.

The next 2 membrane-spanning stretches (helical) occupy residues 36–56 (FSVL…AIGM) and 81–101 (MFIA…IALI).

It belongs to the ATPase C chain family. As to quaternary structure, F-type ATPases have 2 components, F(1) - the catalytic core - and F(0) - the membrane proton channel. F(1) has five subunits: alpha(3), beta(3), gamma(1), delta(1), epsilon(1). F(0) has three main subunits: a(1), b(2) and c(10-14). The alpha and beta chains form an alternating ring which encloses part of the gamma chain. F(1) is attached to F(0) by a central stalk formed by the gamma and epsilon chains, while a peripheral stalk is formed by the delta and b chains.

It is found in the cell inner membrane. Its function is as follows. F(1)F(0) ATP synthase produces ATP from ADP in the presence of a proton or sodium gradient. F-type ATPases consist of two structural domains, F(1) containing the extramembraneous catalytic core and F(0) containing the membrane proton channel, linked together by a central stalk and a peripheral stalk. During catalysis, ATP synthesis in the catalytic domain of F(1) is coupled via a rotary mechanism of the central stalk subunits to proton translocation. The polypeptide is ATP synthase subunit c (Campylobacter jejuni subsp. jejuni serotype O:2 (strain ATCC 700819 / NCTC 11168)).